The chain runs to 234 residues: Adenosine 5'-phosphosulfate reductase (234 aa).

Residues C120, C121, C203, and C206 each coordinate [4Fe-4S] cluster. C229 functions as the Nucleophile; cysteine thiosulfonate intermediate in the catalytic mechanism.

Belongs to the PAPS reductase family. CysH subfamily. [4Fe-4S] cluster serves as cofactor.

The protein resides in the cytoplasm. It carries out the reaction [thioredoxin]-disulfide + sulfite + AMP + 2 H(+) = adenosine 5'-phosphosulfate + [thioredoxin]-dithiol. It functions in the pathway sulfur metabolism; hydrogen sulfide biosynthesis; sulfite from sulfate. Functionally, catalyzes the formation of sulfite from adenosine 5'-phosphosulfate (APS) using thioredoxin as an electron donor. The polypeptide is Adenosine 5'-phosphosulfate reductase (Bacillus cereus (strain B4264)).